The sequence spans 514 residues: Putative selenium-binding protein (514 aa).

The protein belongs to the selenium-binding protein family.

The polypeptide is Putative selenium-binding protein (Caenorhabditis briggsae).